Here is a 199-residue protein sequence, read N- to C-terminus: Recombination protein RecR (199 aa).

The segment at 57 to 72 (CEKCNNFTEEVVCELC) adopts a C4-type zinc-finger fold. The Toprim domain maps to 80-175 (ALLCVVEMPA…KITRIARGLP (96 aa)).

Belongs to the RecR family.

May play a role in DNA repair. It seems to be involved in an RecBC-independent recombinational process of DNA repair. It may act with RecF and RecO. This chain is Recombination protein RecR, found in Nitrosospira multiformis (strain ATCC 25196 / NCIMB 11849 / C 71).